The following is a 505-amino-acid chain: MHEIITLQLGQRANYLATHFWNLQESYFTYGEAEETIIDHDVHFRPGIGADGSETYTPRTLIYDLKGAFGSLRKYNALYELSTDADPGQGLWDGKEVIQRQTPIIPSEYQKYLEQGLPAPALSSDTVRYWSDYNRLFYHPRSIVQLNDYELNSKIMPFEDWSVGDDLFGELDKEHDLLDRDLRPFAEECDQLRALQLFTSSDDAWGGFAAKYVDRLRDEFGKKAVWVWAIEGGKKVQKHNQLKRDMNKARSIHSISPQSSLYVPILDPPTRLPISISLDAQSEWQTSALISTAMETVTLPTRLRSYTDFETSLAGEDGTHKIFELQSEILPEDMSNHTQPVQNPEDRRTQASKGGSSKVKREFDLDFSYDDPNNGDSHIFNQVQVGRGYSPEKEVPKSREDLGLKRKERFYNSEPMLESFYIPLAFPILDSSPRNMFSVKHKEAKINVLAALTASSRTATKLKAMEAMAGRVIGVDERENLVNGLGEIRESYETGWMSDSDFDDD.

Residues 330–358 are disordered; it reads LPEDMSNHTQPVQNPEDRRTQASKGGSSK.

The protein belongs to the misato family.

It is found in the mitochondrion. Functionally, involved in the partitioning of the mitochondrial organelle and mitochondrial DNA (mtDNA) inheritance. This chain is Protein dml1 (dml1), found in Aspergillus fumigatus (strain ATCC MYA-4609 / CBS 101355 / FGSC A1100 / Af293) (Neosartorya fumigata).